The chain runs to 267 residues: Large ribosomal subunit protein uL4 (267 aa).

Belongs to the universal ribosomal protein uL4 family. Part of the 50S ribosomal subunit.

One of the primary rRNA binding proteins, this protein initially binds near the 5'-end of the 23S rRNA. It is important during the early stages of 50S assembly. It makes multiple contacts with different domains of the 23S rRNA in the assembled 50S subunit and ribosome. Functionally, forms part of the polypeptide exit tunnel. This is Large ribosomal subunit protein uL4 from Saccharolobus solfataricus (strain ATCC 35092 / DSM 1617 / JCM 11322 / P2) (Sulfolobus solfataricus).